Consider the following 466-residue polypeptide: Sulfate adenylyltransferase subunit 1 (466 aa).

Residues 22-237 (KELVRFLTCG…LNTIDVKTQE (216 aa)) form the tr-type G domain. The interval 31–38 (GSVDDGKS) is G1. Residue 31 to 38 (GSVDDGKS) coordinates GTP. The segment at 89–93 (GITID) is G2. The tract at residues 110–113 (DTPG) is G3. Residues 110-114 (DTPGH) and 165-168 (NKMD) each bind GTP. The tract at residues 165–168 (NKMD) is G4. A G5 region spans residues 202-204 (SAL).

It belongs to the TRAFAC class translation factor GTPase superfamily. Classic translation factor GTPase family. CysN/NodQ subfamily. Heterodimer composed of CysD, the smaller subunit, and CysN.

The catalysed reaction is sulfate + ATP + H(+) = adenosine 5'-phosphosulfate + diphosphate. It functions in the pathway sulfur metabolism; hydrogen sulfide biosynthesis; sulfite from sulfate: step 1/3. Its function is as follows. With CysD forms the ATP sulfurylase (ATPS) that catalyzes the adenylation of sulfate producing adenosine 5'-phosphosulfate (APS) and diphosphate, the first enzymatic step in sulfur assimilation pathway. APS synthesis involves the formation of a high-energy phosphoric-sulfuric acid anhydride bond driven by GTP hydrolysis by CysN coupled to ATP hydrolysis by CysD. This Colwellia psychrerythraea (strain 34H / ATCC BAA-681) (Vibrio psychroerythus) protein is Sulfate adenylyltransferase subunit 1.